Here is a 376-residue protein sequence, read N- to C-terminus: MSIWMEGFKAVRTLNAAGFEAYIVGGAVRDYLLGKDVDDVDIATQASPHQVADIFTKGVHINQEHKTVLIPGEKGPIEITTYKGETLAEDLQKRDFTINALAMTETREVIDPYGGRQDLQKRLLRSYDAQKRLSEDPLRMLRAARFISSLGFEADRQLVKETTVQKAALQRCARERVVVELEKLLKGMETEAAFAFLQETGAIHSLPGIQITDSQLAELMRLPKQQWDSGDRAWLEFAICTGGPSSMAALPLPKKRKQLVAAGLKAFEYRQTQQRWSDWQLYISGLAIAMQIEEIRAGRQLPSIQKEELAEQWSALPIKAKSDLAITGRDLLHAKAAPGPWMKEALQAAEKAVVTKKCPNEKAAILAFLTMREDGK.

Residue 26 to 29 (GAVR) coordinates CTP. Mg(2+)-binding residues include Asp39 and Asp41. Residues 94 to 95 (RD), Asn99, 136 to 145 (DPLRMLRAAR), and Arg176 contribute to the CTP site.

This sequence belongs to the tRNA nucleotidyltransferase/poly(A) polymerase family. It depends on Mg(2+) as a cofactor.

The catalysed reaction is a tRNA precursor + 2 CTP = a tRNA with a 3' CC end + 2 diphosphate. Functionally, tRNA nucleotidyltransferase involved in the synthesis of the tRNA CCA terminus. Adds the two cytidine residues to tRNA. The protein is CC-adding tRNA nucleotidyltransferase of Shouchella clausii (strain KSM-K16) (Alkalihalobacillus clausii).